A 509-amino-acid chain; its full sequence is Coiled-coil domain-containing protein 181 (509 aa).

Residues 46–82 (ENINQDLKENETVMEHTKRHSDPDKSLQDEVSPRRND) are compositionally biased toward basic and acidic residues. Disordered stretches follow at residues 46 to 120 (ENIN…EEED) and 241 to 367 (PINN…EEKE). Polar residues-rich tracts occupy residues 243 to 266 (NNAN…SVSG) and 300 to 334 (TCPS…STYC). Residues 335–375 (LSPRQKELQKQLEEKREKLKREEERRKIEEEKEKKRENDIV) are a coiled coil. Residues 338 to 367 (RQKELQKQLEEKREKLKREEERRKIEEEKE) show a composition bias toward basic and acidic residues.

Belongs to the CCDC181 family. As to quaternary structure, homodimer. Interacts with HOOK1. Interacts with HOOK2. Interacts with HOOK3.

It is found in the cytoplasm. The protein localises to the cytoskeleton. Its subcellular location is the cell projection. The protein resides in the cilium. It localises to the flagellum. In terms of biological role, microtubule-binding protein that localizes to the microtubular manchette of elongating spermatids. The sequence is that of Coiled-coil domain-containing protein 181 from Homo sapiens (Human).